The primary structure comprises 225 residues: Small ribosomal subunit protein uS3 (225 aa).

The KH type-2 domain maps to 18–87 (VDEYLAKQFY…NPQITVTSVE (70 aa)).

This sequence belongs to the universal ribosomal protein uS3 family. Part of the 30S ribosomal subunit.

Binds the lower part of the 30S subunit head. The protein is Small ribosomal subunit protein uS3 of Sulfurisphaera tokodaii (strain DSM 16993 / JCM 10545 / NBRC 100140 / 7) (Sulfolobus tokodaii).